The primary structure comprises 287 residues: Probable F-box protein At5g04010 (287 aa).

In terms of domain architecture, F-box; degenerate spans 50–101 (PSPPSWEILCLVGPYMDPESLAVASCVSTTWSKCFSSEDLWKSLPATRHSIF).

The sequence is that of Probable F-box protein At5g04010 (NSFBx) from Arabidopsis thaliana (Mouse-ear cress).